A 2586-amino-acid polypeptide reads, in one-letter code: Highly reducing polyketide synthase FUM1 (2586 aa).

The 423-residue stretch at 29 to 451 (VLPVAIVGMG…GANAHCIIET (423 aa)) folds into the Ketosynthase family 3 (KS3) domain. Residues cysteine 201, histidine 336, and histidine 374 each act as for beta-ketoacyl synthase activity in the active site. A malonyl-CoA:ACP transacylase (MAT) domain region spans residues 609-928 (IFTGQGAQWV…TESLLKLAGE (320 aa)). The interval 980 to 1111 (HELLGSRTLE…GQVRPGQDAH (132 aa)) is N-terminal hotdog fold. The dehydratase (DH) domain stretch occupies residues 980–1269 (HELLGSRTLE…LEDGKFSPLE (290 aa)). The PKS/mFAS DH domain maps to 980 to 1274 (HELLGSRTLE…FSPLEMDLAE (295 aa)). The active-site Proton acceptor; for dehydratase activity is histidine 1012. The interval 1125-1274 (QHYPRLVDNL…FSPLEMDLAE (150 aa)) is C-terminal hotdog fold. The Proton donor; for dehydratase activity role is filled by aspartate 1186. The methyltransferase (CMet) domain stretch occupies residues 1450 to 1627 (DFFATAGHTR…GFSGVDSAIY (178 aa)). The tract at residues 1862–2172 (GLLQTLGWVP…KGVHLGKIVV (311 aa)) is enoyl reductase (ER) (ER) domain. Residues 2197-2373 (ASYLLVGGLG…ASVLQIGLIE (177 aa)) are ketoreductase (KR) domain. Residues 2486 to 2565 (PATVELVTNE…GLARLTVDGL (80 aa)) enclose the Carrier domain. O-(pantetheine 4'-phosphoryl)serine is present on serine 2524.

The protein operates within mycotoxin biosynthesis. Its function is as follows. Highly reducing polyketide synthase; part of the gene cluster that mediates the biosynthesis of fumonisins B1 (FB1), B2 (FB2), B3 (FB3), and B4 (FB4), which are carcinogenic mycotoxins. The biosynthesis starts with the FUM1-catalyzed carbon chain assembly from one molecule of acetyl-CoA, eight molecules of malonyl-CoA, and two molecules of methionine (in S-adenosyl form). The C18 polyketide chain is released from the enzyme by a nucleophilic attack of a carbanion, which is derived from R-carbon of alanine by decarboxylation, on the carbonyl carbon of polyketide acyl chain. This step is catalyzed by the pyridoxal 5'-phosphate-dependent aminoacyl transferase FUM8. The resultant 3-keto intermediate is then stereospecifically reduced to a 3-hydroxyl product by reductase FUM13. Subsequent oxidations at C-10 by the cytochrome P450 monooxygenase FUM2, C-14 and C-15 by FUM6, FUM12 or FUM15, tricarballylic esterification of the hydroxyl groups on C-14 and C-15 by acyltransferase FUM14, and C-5 hydroxylation by 2-keto-glutarate-dependent dioxygenase FUM3 furnish the biosynthesis of fumonisins. The tricarballylic moieties are most likely derived from the citric acid cycle, and their addition to the carbon backbone may involve FUM7, FUM10, FUM11 and FUM14. This is Highly reducing polyketide synthase FUM1 from Gibberella moniliformis (strain M3125 / FGSC 7600) (Maize ear and stalk rot fungus).